A 294-amino-acid polypeptide reads, in one-letter code: Cytidine deaminase (294 aa).

2 consecutive CMP/dCMP-type deaminase domains span residues 48 to 168 and 187 to 294; these read DDDA…FGPT and AETD…RVTF. Residue 89 to 91 participates in substrate binding; the sequence is NME. Position 102 (His102) interacts with Zn(2+). Catalysis depends on Glu104, which acts as the Proton donor. Zn(2+) is bound by residues Cys129 and Cys132.

The protein belongs to the cytidine and deoxycytidylate deaminase family. As to quaternary structure, homodimer. Zn(2+) serves as cofactor.

It carries out the reaction cytidine + H2O + H(+) = uridine + NH4(+). The enzyme catalyses 2'-deoxycytidine + H2O + H(+) = 2'-deoxyuridine + NH4(+). Its function is as follows. This enzyme scavenges exogenous and endogenous cytidine and 2'-deoxycytidine for UMP synthesis. In Yersinia pseudotuberculosis serotype O:1b (strain IP 31758), this protein is Cytidine deaminase.